We begin with the raw amino-acid sequence, 497 residues long: Delayed-rectifier potassium channel regulatory subunit KCNS1 (497 aa).

Topologically, residues 1–186 (MVSEFPGPGS…LTMENPGYSL (186 aa)) are cytoplasmic. A helical transmembrane segment spans residues 187-208 (PSKLFSCVSIGVVLASIAAMCI). Residues 209 to 239 (HSLPEYQAREAAAAVAAVAAGRSAEDVRDDP) are Extracellular-facing. The helical transmembrane segment at 240–262 (VLRRLEYFCIAWFSFEVSSRLLL) threads the bilayer. Residues 263 to 273 (APSTRNFFCHP) are Cytoplasmic-facing. The chain crosses the membrane as a helical span at residues 274-291 (LNLIDIVSVLPFYLTLLA). Topologically, residues 292–309 (GAALGDRRGASGEELGDL) are extracellular. The chain crosses the membrane as a helical; Voltage-sensor span at residues 310 to 330 (GKVVQVFRLMRIFRVLKLARH). The Cytoplasmic segment spans residues 331-345 (STGLRSLGATLKHSY). A helical transmembrane segment spans residues 346 to 367 (REVGILLLYLAVGVSVFSGVAY). At 368–379 (TAEEKNVGFDTI) the chain is on the extracellular side. The segment at residues 380–391 (PACWWWGTVSMT) is an intramembrane region (helical). Positions 392–397 (TVGYGD) match the Selectivity filter motif. An intramembrane segment occupies 392 to 399 (TVGYGDVV). The Extracellular segment spans residues 400 to 406 (PETVAGK). A helical transmembrane segment spans residues 407–435 (LAASGCILGGILVVALPITIIFNKFSHFY). At 436-497 (RRQKALEAAV…PSEPAKSHSY (62 aa)) the chain is on the cytoplasmic side. A disordered region spans residues 464–497 (SDVSLETSRETSQEGRSTDLETQAPSEPAKSHSY). The span at 470 to 482 (TSRETSQEGRSTD) shows a compositional bias: basic and acidic residues.

It belongs to the potassium channel family. S (TC 1.A.1.2) subfamily. Kv9.1/KCNS1 sub-subfamily. In terms of assembly, heterotetramer with KCNB1. Heterotetramer with KCNB2. Does not form homomultimers. In terms of tissue distribution, highly expressed in brain, but not in the other tissues tested.

The protein localises to the cell membrane. Functionally, potassium channel regulatory subunit that modulate the delayed rectifier voltage-gated potassium channel activity of KCNB1 and KCNB2 by altering their kinetics, expression levels, and shifting the half-inactivation potential to more polarized values. While it does not form functional channels on its own, it can form functional heterotetrameric channels with KCNB1 and KCNB2. Each regulatory subunit has unique regulatory properties that can lead to extensive inhibition, significant changes in kinetics, and/or substantial shifts in the voltage dependencies of the inactivation process. The protein is Delayed-rectifier potassium channel regulatory subunit KCNS1 of Rattus norvegicus (Rat).